The following is a 754-amino-acid chain: 5-methyltetrahydropteroyltriglutamate--homocysteine methyltransferase (754 aa).

Residues 15 to 18 (RELK) and lysine 114 each bind 5-methyltetrahydropteroyltri-L-glutamate. L-homocysteine contacts are provided by residues 430–432 (IGS) and glutamate 483. L-methionine is bound by residues 430–432 (IGS) and glutamate 483. 5-methyltetrahydropteroyltri-L-glutamate-binding positions include 514-515 (RC) and tryptophan 560. Aspartate 598 lines the L-homocysteine pocket. Residue aspartate 598 participates in L-methionine binding. Glutamate 604 contacts 5-methyltetrahydropteroyltri-L-glutamate. Residues histidine 641, cysteine 643, and glutamate 665 each coordinate Zn(2+). Histidine 694 functions as the Proton donor in the catalytic mechanism. Cysteine 726 serves as a coordination point for Zn(2+).

This sequence belongs to the vitamin-B12 independent methionine synthase family. Zn(2+) serves as cofactor.

The enzyme catalyses 5-methyltetrahydropteroyltri-L-glutamate + L-homocysteine = tetrahydropteroyltri-L-glutamate + L-methionine. The protein operates within amino-acid biosynthesis; L-methionine biosynthesis via de novo pathway; L-methionine from L-homocysteine (MetE route): step 1/1. In terms of biological role, catalyzes the transfer of a methyl group from 5-methyltetrahydrofolate to homocysteine resulting in methionine formation. The polypeptide is 5-methyltetrahydropteroyltriglutamate--homocysteine methyltransferase (Campylobacter jejuni subsp. doylei (strain ATCC BAA-1458 / RM4099 / 269.97)).